Here is a 60-residue protein sequence, read N- to C-terminus: Small, acid-soluble spore protein C2 (60 aa).

This sequence belongs to the alpha/beta-type SASP family. In terms of processing, SASP are degraded in the first minutes of spore germination and provide amino acids for both new protein synthesis and metabolism.

Its function is as follows. SASP are bound to spore DNA. They are double-stranded DNA-binding proteins that cause DNA to change to an a-like conformation. They protect the DNA backbone from chemical and enzymatic cleavage and are thus involved in dormant spore's high resistance to UV light. This chain is Small, acid-soluble spore protein C2 (sspC2), found in Clostridium perfringens (strain 13 / Type A).